Here is an 81-residue protein sequence, read N- to C-terminus: Cytochrome c oxidase subunit 7B2, mitochondrial (81 aa).

A mitochondrion-targeting transit peptide spans 1-25; it reads MMFPLARNALSSLKIRSILQSMARQ. Residues 26 to 33 lie on the Mitochondrial matrix side of the membrane; sequence SHVKHSPD. Residues 34 to 60 form a helical membrane-spanning segment; that stretch reads FHDKYGNAVLASGTAFCVVAWVFTATQ. Over 61 to 81 the chain is Mitochondrial intermembrane; sequence IGIEWNLSPVGRVTPKEWKHQ.

It belongs to the cytochrome c oxidase VIIb family. Component of the cytochrome c oxidase (complex IV, CIV), a multisubunit enzyme composed of 14 subunits. The complex is composed of a catalytic core of 3 subunits MT-CO1, MT-CO2 and MT-CO3, encoded in the mitochondrial DNA, and 11 supernumerary subunits COX4I, COX5A, COX5B, COX6A, COX6B, COX6C, COX7A, COX7B, COX7C, COX8 and NDUFA4, which are encoded in the nuclear genome. The complex exists as a monomer or a dimer and forms supercomplexes (SCs) in the inner mitochondrial membrane with NADH-ubiquinone oxidoreductase (complex I, CI) and ubiquinol-cytochrome c oxidoreductase (cytochrome b-c1 complex, complex III, CIII), resulting in different assemblies (supercomplex SCI(1)III(2)IV(1) and megacomplex MCI(2)III(2)IV(2)).

It is found in the mitochondrion inner membrane. It functions in the pathway energy metabolism; oxidative phosphorylation. Functionally, component of the cytochrome c oxidase, the last enzyme in the mitochondrial electron transport chain which drives oxidative phosphorylation. The respiratory chain contains 3 multisubunit complexes succinate dehydrogenase (complex II, CII), ubiquinol-cytochrome c oxidoreductase (cytochrome b-c1 complex, complex III, CIII) and cytochrome c oxidase (complex IV, CIV), that cooperate to transfer electrons derived from NADH and succinate to molecular oxygen, creating an electrochemical gradient over the inner membrane that drives transmembrane transport and the ATP synthase. Cytochrome c oxidase is the component of the respiratory chain that catalyzes the reduction of oxygen to water. Electrons originating from reduced cytochrome c in the intermembrane space (IMS) are transferred via the dinuclear copper A center (CU(A)) of subunit 2 and heme A of subunit 1 to the active site in subunit 1, a binuclear center (BNC) formed by heme A3 and copper B (CU(B)). The BNC reduces molecular oxygen to 2 water molecules using 4 electrons from cytochrome c in the IMS and 4 protons from the mitochondrial matrix. This is Cytochrome c oxidase subunit 7B2, mitochondrial (COX7B2) from Macaca fascicularis (Crab-eating macaque).